Reading from the N-terminus, the 481-residue chain is Tryptophan--tRNA ligase, cytoplasmic (481 aa).

The WHEP-TRS domain occupies 12–68 (SPLELFNSIATQGELVRSLKAGNAPKDEIDSAVKMLLSLKMSYKAAMGEEYKAGCPP). Lysine 158 bears the N6-succinyllysine mark. A 'HIGH' region motif is present at residues 168–177 (PSSEAMHLGH). A 'KMSKS' region motif is present at residues 353-357 (KMSAS). At serine 355 the chain carries Phosphoserine.

It belongs to the class-I aminoacyl-tRNA synthetase family. As to quaternary structure, homodimer. Interacts with oxidized form of GAPDH. Post-translationally, proteolytic cleavage generates 2 forms; T1-TrpRS and T2-TrpRS. In terms of tissue distribution, isoform 2 is widely expressed, isoform 1 is found only in embryonic stem cells.

It is found in the cytoplasm. The enzyme catalyses tRNA(Trp) + L-tryptophan + ATP = L-tryptophyl-tRNA(Trp) + AMP + diphosphate + H(+). In terms of biological role, catalyzes the attachment of tryptophan to tRNA(Trp) in a two-step reaction: tryptophan is first activated by ATP to form Trp-AMP and then transferred to the acceptor end of the tRNA(Trp). Could also possess an angiostatic activity. In Mus musculus (Mouse), this protein is Tryptophan--tRNA ligase, cytoplasmic.